We begin with the raw amino-acid sequence, 493 residues long: MPLYSVTVKWGKEKFGGVELNTDEPPMVFKAQLFALTGVQPARQRVMVKGGTLKDDDWGNIKIKNGMTILMMGSADALPEEPSAKTVFVEDMTEEQLASAMELPCGLTNLGNTCYMNATVQCIRSVPELKDALKRYAGALRASGEMASAQYITAALRDLFDSMDKTSSSIPPIILLQFLHMAFPQFAEKGEQGQYLQQDANECWIQMMRVLQQKLEAIEDDSVKETDSSAAAVAPSKKKSLIDQFFGVEFETTMKCTESEEEEVTKGKENQLQLSCFINQEVKYLFTGLKLRLQEEITKQSPTLQRNALYIKSSKISRLPAYLTIQMVRFFYKEKESVNAKVLKDVKFPLMLDVYELCTPELQEKMVSFRSKFKDIEDKKVNQQPNASDKKSSPQKEVRYEPFSFADDIGSNNCGYYDLQAVLTHQGRSSSSGHYVSWVKRKHDEWIKFDDDKVSIVTPEDILRLSGGGDWHIAYVLLYGPRRVEIMEEENEQ.

Positions tyrosine 4–glutamate 80 constitute a Ubiquitin-like domain. Phosphothreonine is present on threonine 52. The 378-residue stretch at cysteine 105–arginine 482 folds into the USP domain. Cysteine 114 functions as the Nucleophile in the catalytic mechanism. Phosphoserine is present on residues serine 143, serine 148, serine 236, serine 301, and serine 431. Catalysis depends on histidine 434, which acts as the Proton acceptor. Lysine 448 is modified (N6-acetyllysine).

The protein belongs to the peptidase C19 family. USP14/UBP6 subfamily. In terms of assembly, homodimer (Potential). Associates with the 26S proteasome. Interacts with FANCC, CXCR4 and ERN1. Interacts with TRIM14; this interaction recruits USP14 to cleave ubiquitin chains of CGAS.

It is found in the cytoplasm. It localises to the cell membrane. It carries out the reaction Thiol-dependent hydrolysis of ester, thioester, amide, peptide and isopeptide bonds formed by the C-terminal Gly of ubiquitin (a 76-residue protein attached to proteins as an intracellular targeting signal).. Its function is as follows. Proteasome-associated deubiquitinase which releases ubiquitin from the proteasome targeted ubiquitinated proteins. Ensures the regeneration of ubiquitin at the proteasome. Is a reversibly associated subunit of the proteasome and a large fraction of proteasome-free protein exists within the cell. Required for the degradation of the chemokine receptor CXCR4 which is critical for CXCL12-induced cell chemotaxis. Also serves as a physiological inhibitor of endoplasmic reticulum-associated degradation (ERAD) under the non-stressed condition by inhibiting the degradation of unfolded endoplasmic reticulum proteins via interaction with ERN1. Indispensable for synaptic development and function at neuromuscular junctions (NMJs). Plays a role in the innate immune defense against viruses by stabilizing the viral DNA sensor CGAS and thus inhibiting its autophagic degradation. This chain is Ubiquitin carboxyl-terminal hydrolase 14 (USP14), found in Oryctolagus cuniculus (Rabbit).